Consider the following 53-residue polypeptide: Conotoxin Cal6.31 (53 aa).

The first 24 residues, 1–24, serve as a signal peptide directing secretion; sequence MKLTCVLIAAVLLLAVCQLDSADA. Disulfide bonds link C29-C43, C36-C47, and C42-C51.

The protein belongs to the conotoxin O1 superfamily. In terms of tissue distribution, expressed by the venom duct.

Its subcellular location is the secreted. In terms of biological role, probable neurotoxin. This is Conotoxin Cal6.31 from Californiconus californicus (California cone).